Here is a 163-residue protein sequence, read N- to C-terminus: Cyclic pyranopterin monophosphate synthase (163 aa).

Substrate contacts are provided by residues 75–77 (LCH) and 113–114 (ME). Residue aspartate 128 is part of the active site.

The protein belongs to the MoaC family. In terms of assembly, homohexamer; trimer of dimers.

It catalyses the reaction (8S)-3',8-cyclo-7,8-dihydroguanosine 5'-triphosphate = cyclic pyranopterin phosphate + diphosphate. Its pathway is cofactor biosynthesis; molybdopterin biosynthesis. In terms of biological role, catalyzes the conversion of (8S)-3',8-cyclo-7,8-dihydroguanosine 5'-triphosphate to cyclic pyranopterin monophosphate (cPMP). The sequence is that of Cyclic pyranopterin monophosphate synthase from Magnetococcus marinus (strain ATCC BAA-1437 / JCM 17883 / MC-1).